Here is a 554-residue protein sequence, read N- to C-terminus: Sesquithujene synthase A (554 aa).

2 residues coordinate Mg(2+): aspartate 308 and aspartate 312. 2 residues coordinate substrate: aspartate 308 and aspartate 312. Residues 308-312 (DDMFD) carry the DDXXD motif motif. A determine the stereoselectivity of the enzyme region spans residues 407–411 (SIGAN). Positions 449 and 452 each coordinate substrate. Mg(2+) is bound by residues asparagine 452, serine 456, and glutamate 460.

The protein belongs to the terpene synthase family. In terms of assembly, monomer. Mg(2+) serves as cofactor. Requires Mn(2+) as cofactor. As to expression, highly expressed in the husk. Detected in leaves.

Its subcellular location is the cytoplasm. The enzyme catalyses (2E,6E)-farnesyl diphosphate = sesquithujene + diphosphate. The catalysed reaction is (2Z,6Z)-farnesyl diphosphate = (1S,5S,6S)-alpha-bergamotene + diphosphate. It catalyses the reaction (2E,6E)-farnesyl diphosphate = (E)-beta-farnesene + diphosphate. It carries out the reaction (2E,6E)-farnesyl diphosphate = (S)-beta-bisabolene + diphosphate. The enzyme catalyses (2Z,6E)-farnesyl diphosphate = (-)-beta-curcumene + diphosphate. The catalysed reaction is (2E,6E)-farnesyl diphosphate = gamma-curcumene + diphosphate. It catalyses the reaction (2E,6E)-farnesyl diphosphate = sesquisabinene B + diphosphate. Its pathway is secondary metabolite biosynthesis; terpenoid biosynthesis. In terms of biological role, sesquiterpene synthase involved in the production after herbivore attack of a blend of volatiles that attracts natural enemies of herbivores. Converts farnesyl diphosphate to sesquithujene, (S)-beta-bisabolene, (Z)-alpha-bergamotene, sesquisabinene B and several minor products. Can also act in vitro as a monoterpene synthase, converting geranyl diphosphate to (S)-(-)-limonene, beta-myrcene and 11 other monoterpenes. The sequence is that of Sesquithujene synthase A from Zea mays (Maize).